A 497-amino-acid polypeptide reads, in one-letter code: Serine hydroxymethyltransferase (497 aa).

(6S)-5,6,7,8-tetrahydrofolate is bound by residues leucine 176 and glycine 180–leucine 182. Lysine 289 carries the N6-(pyridoxal phosphate)lysine modification.

Belongs to the SHMT family. Homodimer. Pyridoxal 5'-phosphate is required as a cofactor.

The protein localises to the cytoplasm. The enzyme catalyses (6R)-5,10-methylene-5,6,7,8-tetrahydrofolate + glycine + H2O = (6S)-5,6,7,8-tetrahydrofolate + L-serine. It functions in the pathway one-carbon metabolism; tetrahydrofolate interconversion. Its pathway is amino-acid biosynthesis; glycine biosynthesis; glycine from L-serine: step 1/1. Its function is as follows. Catalyzes the reversible interconversion of serine and glycine with tetrahydrofolate (THF) serving as the one-carbon carrier. This reaction serves as the major source of one-carbon groups required for the biosynthesis of purines, thymidylate, methionine, and other important biomolecules. Also exhibits THF-independent aldolase activity toward beta-hydroxyamino acids, producing glycine and aldehydes, via a retro-aldol mechanism. In Chlamydia trachomatis serovar A (strain ATCC VR-571B / DSM 19440 / HAR-13), this protein is Serine hydroxymethyltransferase.